The sequence spans 445 residues: Proton extrusion protein PxcA (445 aa).

The next 4 helical transmembrane spans lie at 227–247 (FILLLIIVPLLTQQLTKTFLI), 322–342 (AIANIFADICSLIAFGFVVAF), 369–389 (LIILFTDIFVGFHSPHGWEVI), and 405–425 (FNFLFIATFPVILDTVLKYWI).

This sequence belongs to the CemA family.

It is found in the cell inner membrane. Functionally, required for H(+) efflux immediately after light irradiation to form a rapid H(+) concentration gradient across the thylakoid membranes. Together with PxcL, contributes to transient H(+) uptake following dark to light transition. This chain is Proton extrusion protein PxcA, found in Microcystis aeruginosa (strain NIES-843 / IAM M-2473).